Reading from the N-terminus, the 151-residue chain is Endoribonuclease YbeY (151 aa).

H117, H121, and H127 together coordinate Zn(2+).

The protein belongs to the endoribonuclease YbeY family. The cofactor is Zn(2+).

It is found in the cytoplasm. Its function is as follows. Single strand-specific metallo-endoribonuclease involved in late-stage 70S ribosome quality control and in maturation of the 3' terminus of the 16S rRNA. This chain is Endoribonuclease YbeY, found in Alkaliphilus oremlandii (strain OhILAs) (Clostridium oremlandii (strain OhILAs)).